Here is an 88-residue protein sequence, read N- to C-terminus: Small ribosomal subunit protein bS20 (88 aa).

The tract at residues 1–26 is disordered; it reads MANTAQARKRARQNTKRRQNSASQRS. Residues 7–19 show a composition bias toward basic residues; the sequence is ARKRARQNTKRRQ.

It belongs to the bacterial ribosomal protein bS20 family.

Functionally, binds directly to 16S ribosomal RNA. This Psychrobacter arcticus (strain DSM 17307 / VKM B-2377 / 273-4) protein is Small ribosomal subunit protein bS20.